A 157-amino-acid polypeptide reads, in one-letter code: uncharacterized protein (157 aa).

The signal sequence occupies residues 1 to 17 (MSMKTKAAFHLVLFGLA). A lipid anchor (N-palmitoyl cysteine) is attached at C18. C18 is lipidated: S-diacylglycerol cysteine. The next 3 membrane-spanning stretches (helical) occupy residues 42–64 (MVFD…YLYL), 98–120 (ASYI…YPLF), and 124–146 (IPFF…YVIS).

It localises to the cell membrane. This is an uncharacterized protein from Bacillus subtilis (strain 168).